A 310-amino-acid chain; its full sequence is Putative type II methyltransferase M.MJ0563P (310 aa).

The SAM-dependent MTase C5-type domain occupies 1 to 310 (MNVIDLFSGC…AIAKEIKKQL (310 aa)). Cys-77 is an active-site residue.

It belongs to the class I-like SAM-binding methyltransferase superfamily. C5-methyltransferase family.

The enzyme catalyses a 2'-deoxycytidine in DNA + S-adenosyl-L-methionine = a 5-methyl-2'-deoxycytidine in DNA + S-adenosyl-L-homocysteine + H(+). Functionally, a putative methylase that may protect DNA from cleavage by an unknown endonuclease. This Methanocaldococcus jannaschii (strain ATCC 43067 / DSM 2661 / JAL-1 / JCM 10045 / NBRC 100440) (Methanococcus jannaschii) protein is Putative type II methyltransferase M.MJ0563P.